The following is a 395-amino-acid chain: S-adenosylmethionine synthase (395 aa).

H16 provides a ligand contact to ATP. Residue D18 participates in Mg(2+) binding. E44 serves as a coordination point for K(+). E57 and Q100 together coordinate L-methionine. A flexible loop region spans residues 100 to 110 (QSPDIAQGVDR). ATP is bound by residues 167-169 (DAK), 233-234 (RF), D242, 248-249 (RK), A265, and K269. Position 242 (D242) interacts with L-methionine. K273 contributes to the L-methionine binding site.

This sequence belongs to the AdoMet synthase family. As to quaternary structure, homotetramer; dimer of dimers. Mg(2+) is required as a cofactor. It depends on K(+) as a cofactor.

The protein resides in the cytoplasm. The catalysed reaction is L-methionine + ATP + H2O = S-adenosyl-L-methionine + phosphate + diphosphate. It participates in amino-acid biosynthesis; S-adenosyl-L-methionine biosynthesis; S-adenosyl-L-methionine from L-methionine: step 1/1. Functionally, catalyzes the formation of S-adenosylmethionine (AdoMet) from methionine and ATP. The overall synthetic reaction is composed of two sequential steps, AdoMet formation and the subsequent tripolyphosphate hydrolysis which occurs prior to release of AdoMet from the enzyme. The polypeptide is S-adenosylmethionine synthase (Burkholderia ambifaria (strain MC40-6)).